The chain runs to 698 residues: MDFVRLARLFSRARPMGLFILQHLDPCRARWAGGREGLMRPVWAPFGSSSSQLPLGQERQENTGSLGSDPSHSNSTATQEEDEEESFGALSDKYSSRRLFRKSTAQFHNLRFGERRDEQTKPEPKLWRGQRNTPYWYFLQCKRLIKEGKLVEALDLFERQMLKEERLQPMESNYTALIGGCGRVGYLKKAFSLYNQMKKRDLEPSDATYTALFNVCAESPWKDSALQSALKLRQQLQAKNFELNLKTYHALLKMAAKCADLRMCLDVFKEIIHKGHVVTEETFSFLLMGCIQDKKTGFRYALQVWRLMLSLGLQPSRDSYNLLLVAARDCGLGDPQVASELLLKPREEATVLQPPVSRQQPRRTAQAKAGNLMSAMLHVEALERQLFLETSQALGPPEPPEARVPSKAQPEVDTKAEPSHTAALTPVALKPPPLELEVNLLTPGAVPPTVVSFGTVTTPADRLALVGGLEGFLSKMAEHRQQPDIRTLTLLAEVVESGSPAESLLLALLDEHQVEADLTFFNTLVRKKSKLGDLEGAKALLPVLAKRGLVPNLQTFCNLAIGCHRPKDGLQLLTDMKKSQVTPNSHIYSALINAAVRKLNYTYLINILKDMKQNRVPVNEVVIRQLEFAAQYPPTFDRYQGKNTYLEKIDGFRAYYKQWLTVMPAEETPHPWQKFRTKPQEDQDTRKEADDGCALGGR.

The disordered stretch occupies residues 49–88; the sequence is SSSQLPLGQERQENTGSLGSDPSHSNSTATQEEDEEESFG. A compositionally biased stretch (polar residues) spans 62-78; sequence NTGSLGSDPSHSNSTAT. 6 PPR repeats span residues 133–169, 170–204, 205–243, 244–278, 279–315, and 316–352; these read TPYWYFLQCKRLIKEGKLVEALDLFERQMLKEERLQP, MESNYTALIGGCGRVGYLKKAFSLYNQMKKRDLEP, SDATYTALFNVCAESPWKDSALQSALKLRQQLQAKNFEL, NLKTYHALLKMAAKCADLRMCLDVFKEIIHKGHVV, TEETFSFLLMGCIQDKKTGFRYALQVWRLMLSLGLQP, and SRDSYNLLLVAARDCGLGDPQVASELLLKPREEATVL. The interval 392–419 is disordered; that stretch reads QALGPPEPPEARVPSKAQPEVDTKAEPS. 3 PPR repeats span residues 517–551, 552–583, and 584–618; these read DLTFFNTLVRKKSKLGDLEGAKALLPVLAKRGLVP, NLQTFCNLAIGCHRPKDGLQLLTDMKKSQVTP, and NSHIYSALINAAVRKLNYTYLINILKDMKQNRVPV. Positions 670-698 are disordered; that stretch reads HPWQKFRTKPQEDQDTRKEADDGCALGGR. The span at 678–690 shows a compositional bias: basic and acidic residues; it reads KPQEDQDTRKEAD.

This sequence belongs to the PTCD1 family. As to quaternary structure, associates with mitochondrial leucine tRNAs. Interacts with ELAC2.

It localises to the mitochondrion. The protein resides in the mitochondrion matrix. Its function is as follows. Mitochondrial protein implicated in negative regulation of leucine tRNA levels, as well as negative regulation of mitochondria-encoded proteins and COX activity. Also affects the 3'-processing of mitochondrial tRNAs. The sequence is that of Pentatricopeptide repeat-containing protein 1, mitochondrial (PTCD1) from Pongo abelii (Sumatran orangutan).